The sequence spans 433 residues: Legumain (433 aa).

An N-terminal signal peptide occupies residues 1–17 (MIWEFTVLLSLVLGTGA). A propeptide spanning residues 18–25 (VPLEDPED) is cleaved from the precursor. A glycan (N-linked (GlcNAc...) asparagine) is linked at Asn-91. His-148 is a catalytic residue. N-linked (GlcNAc...) asparagine glycosylation occurs at Asn-167. Cys-189 acts as the Nucleophile in catalysis. N-linked (GlcNAc...) asparagine glycosylation is found at Asn-263 and Asn-272. Positions 324 to 433 (DLQESRRLVQ…SMNKVCHGYY (110 aa)) are excised as a propeptide. Disulfide bonds link Cys-378–Cys-412 and Cys-390–Cys-429.

It belongs to the peptidase C13 family. Homodimer before autocatalytic removal of the propeptide. Monomer after autocatalytic processing. May interact with integrins. Activated by autocatalytic processing at pH 4. In terms of tissue distribution, detected in kidney (at protein level).

It is found in the lysosome. The catalysed reaction is Hydrolysis of proteins and small molecule substrates at -Asn-|-Xaa- bonds.. Its function is as follows. Has a strict specificity for hydrolysis of asparaginyl bonds. Can also cleave aspartyl bonds slowly, especially under acidic conditions. Involved in the processing of proteins for MHC class II antigen presentation in the lysosomal/endosomal system. Also involved in MHC class I antigen presentation in cross-presenting dendritic cells by mediating cleavage and maturation of Perforin-2 (MPEG1), thereby promoting antigen translocation in the cytosol. Required for normal lysosomal protein degradation in renal proximal tubules. Required for normal degradation of internalized EGFR. Plays a role in the regulation of cell proliferation via its role in EGFR degradation. The polypeptide is Legumain (LGMN) (Bos taurus (Bovine)).